The sequence spans 248 residues: Stress-related protein (248 aa).

Belongs to the REF/SRPP family.

The protein is Stress-related protein (SRP) of Vitis riparia (Frost grape).